Consider the following 243-residue polypeptide: tRNA (guanine-N(1)-)-methyltransferase (243 aa).

S-adenosyl-L-methionine-binding positions include Gly113 and 133–138 (IGDFVL).

Belongs to the RNA methyltransferase TrmD family. In terms of assembly, homodimer.

The protein resides in the cytoplasm. It carries out the reaction guanosine(37) in tRNA + S-adenosyl-L-methionine = N(1)-methylguanosine(37) in tRNA + S-adenosyl-L-homocysteine + H(+). Specifically methylates guanosine-37 in various tRNAs. The chain is tRNA (guanine-N(1)-)-methyltransferase from Bacillus licheniformis (strain ATCC 14580 / DSM 13 / JCM 2505 / CCUG 7422 / NBRC 12200 / NCIMB 9375 / NCTC 10341 / NRRL NRS-1264 / Gibson 46).